A 30-amino-acid chain; its full sequence is Phospholipase A2 acanmyotoxin-2 (30 aa).

Ca(2+) contacts are provided by Tyr28 and Gly30.

The cofactor is Ca(2+). In terms of processing, contains seven disulfide bonds. As to expression, expressed by the venom gland.

The protein localises to the secreted. The enzyme catalyses a 1,2-diacyl-sn-glycero-3-phosphocholine + H2O = a 1-acyl-sn-glycero-3-phosphocholine + a fatty acid + H(+). Snake venom phospholipase A2 (PLA2) that has myotoxic activity but no significant neurotoxicity. PLA2 catalyzes the calcium-dependent hydrolysis of the 2-acyl groups in 3-sn-phosphoglycerides. This chain is Phospholipase A2 acanmyotoxin-2, found in Acanthophis sp. (strain Seram) (Seram death adder).